The chain runs to 301 residues: Homoserine kinase (301 aa).

Residue 81 to 91 (RPSSGLGSSAA) coordinates ATP.

This sequence belongs to the GHMP kinase family. Homoserine kinase subfamily.

The protein resides in the cytoplasm. It carries out the reaction L-homoserine + ATP = O-phospho-L-homoserine + ADP + H(+). It participates in amino-acid biosynthesis; L-threonine biosynthesis; L-threonine from L-aspartate: step 4/5. Its function is as follows. Catalyzes the ATP-dependent phosphorylation of L-homoserine to L-homoserine phosphate. This Halobacterium salinarum (strain ATCC 29341 / DSM 671 / R1) protein is Homoserine kinase.